The primary structure comprises 462 residues: Glutamate--tRNA ligase 1 (462 aa).

A 'HIGH' region motif is present at residues 8-18 (PSPTGYLHIGG). Residues 237 to 241 (KLSKR) carry the 'KMSKS' region motif. K240 is an ATP binding site.

This sequence belongs to the class-I aminoacyl-tRNA synthetase family. Glutamate--tRNA ligase type 1 subfamily. As to quaternary structure, monomer.

It is found in the cytoplasm. The enzyme catalyses tRNA(Glu) + L-glutamate + ATP = L-glutamyl-tRNA(Glu) + AMP + diphosphate. Its function is as follows. Catalyzes the attachment of glutamate to tRNA(Glu) in a two-step reaction: glutamate is first activated by ATP to form Glu-AMP and then transferred to the acceptor end of tRNA(Glu). In Sulfurimonas denitrificans (strain ATCC 33889 / DSM 1251) (Thiomicrospira denitrificans (strain ATCC 33889 / DSM 1251)), this protein is Glutamate--tRNA ligase 1.